Consider the following 159-residue polypeptide: UPF0201 protein MK0399 (159 aa).

It belongs to the UPF0201 family.

The chain is UPF0201 protein MK0399 from Methanopyrus kandleri (strain AV19 / DSM 6324 / JCM 9639 / NBRC 100938).